Reading from the N-terminus, the 280-residue chain is Diaminopimelate epimerase (280 aa).

The substrate site is built by Asn12, Gln45, and Asn65. Cys74 acts as the Proton donor in catalysis. Substrate contacts are provided by residues 75–76, Asn163, Asn196, and 214–215; these read GN and ER. Catalysis depends on Cys223, which acts as the Proton acceptor. 224 to 225 is a substrate binding site; that stretch reads GT.

This sequence belongs to the diaminopimelate epimerase family. As to quaternary structure, homodimer.

It is found in the cytoplasm. The enzyme catalyses (2S,6S)-2,6-diaminopimelate = meso-2,6-diaminopimelate. The protein operates within amino-acid biosynthesis; L-lysine biosynthesis via DAP pathway; DL-2,6-diaminopimelate from LL-2,6-diaminopimelate: step 1/1. Its function is as follows. Catalyzes the stereoinversion of LL-2,6-diaminopimelate (L,L-DAP) to meso-diaminopimelate (meso-DAP), a precursor of L-lysine and an essential component of the bacterial peptidoglycan. This is Diaminopimelate epimerase from Shewanella sediminis (strain HAW-EB3).